A 208-amino-acid chain; its full sequence is Probable GTP-binding protein EngB (208 aa).

One can recognise an EngB-type G domain in the interval 18–187 (KQFEICVIGR…FALMKKVVIE (170 aa)). GTP contacts are provided by residues 26-33 (GRSNVGKS), 52-56 (GRTQL), 69-72 (DLPG), 135-138 (NKVD), and 166-168 (VSA). Mg(2+) is bound by residues Ser33 and Thr54.

The protein belongs to the TRAFAC class TrmE-Era-EngA-EngB-Septin-like GTPase superfamily. EngB GTPase family. Mg(2+) serves as cofactor.

Necessary for normal cell division and for the maintenance of normal septation. This is Probable GTP-binding protein EngB from Ureaplasma urealyticum serovar 10 (strain ATCC 33699 / Western).